The sequence spans 937 residues: Proprotein convertase subtilisin/kexin type 6 (937 aa).

A compositionally biased stretch (pro residues) spans 1–16 (MPPRAPPAPGPRPPPR). Residues 1–22 (MPPRAPPAPGPRPPPRAAGRHG) form a disordered region. Positions 1-45 (MPPRAPPAPGPRPPPRAAGRHGLSPLAPRPWRWLLLLALPAVCSA) are cleaved as a signal peptide. Positions 46–132 (LPPPRPVYTN…QQEVKRRVKR (87 aa)) are excised as a propeptide. The Peptidase S8 domain occupies 149–468 (MWYMHCADKN…FGLVDAEALV (320 aa)). Catalysis depends on charge relay system residues Asp186 and His227. An N-linked (GlcNAc...) asparagine glycan is attached at Asn240. The active-site Charge relay system is the Ser401. The 141-residue stretch at 476 to 616 (AVPSQHMCVA…SLILYGTAEH (141 aa)) folds into the P/Homo B domain. The Cell attachment site signature appears at 534-536 (RGD). A disordered region spans residues 621-656 (FSSHQSRSRMLELSVPEQEPLKAEGPPPQAETPEEE). 5 FU repeats span residues 660 to 707 (TGVC…GYFG), 711 to 758 (ARRC…GLYA), 762 to 806 (QRLC…GTYF), 810 to 855 (LIRC…GFYP), and 863 to 911 (HKVC…ETFC). Residues 680-898 (CLNCVHFSLG…GFTQLGTSCI (219 aa)) are CRM (Cys-rich motif). N-linked (GlcNAc...) asparagine glycosylation is found at Asn882 and Asn900. The 39-residue stretch at 899–937 (TNHTCSNADETFCEMVKSNRLCERKLFIQFCCRTCLLAG) folds into the PLAC domain.

The protein belongs to the peptidase S8 family. As to quaternary structure, the precursor protein seems to exist in the reticulum endoplasmic as both a monomer and a dimer-sized complex whereas mature form exists only as a monomer, suggesting that propeptide cleavage affects its tertiary or quaternary structure. Interacts (immature form including the propeptide) with RCN3; probably involved in the maturation and the secretion of PCSK6. Ca(2+) serves as cofactor. As to expression, high expression in the anterior pituitary and in several brain regions, the atrium, and the ventricle.

Functionally, serine endoprotease that processes various proproteins by cleavage at paired basic amino acids, recognizing the RXXX[KR]R consensus motif. Likely functions in the constitutive secretory pathway, with unique restricted distribution in both neuroendocrine and non-neuroendocrine tissues. The chain is Proprotein convertase subtilisin/kexin type 6 (Pcsk6) from Rattus norvegicus (Rat).